The primary structure comprises 184 residues: GTP cyclohydrolase 1 (184 aa).

The Zn(2+) site is built by Cys-75, His-78, and Cys-146.

Belongs to the GTP cyclohydrolase I family. In terms of assembly, toroid-shaped homodecamer, composed of two pentamers of five dimers.

The catalysed reaction is GTP + H2O = 7,8-dihydroneopterin 3'-triphosphate + formate + H(+). Its pathway is cofactor biosynthesis; 7,8-dihydroneopterin triphosphate biosynthesis; 7,8-dihydroneopterin triphosphate from GTP: step 1/1. The chain is GTP cyclohydrolase 1 from Pseudoalteromonas atlantica (strain T6c / ATCC BAA-1087).